The sequence spans 431 residues: FAD-dependent monooxygenase nodY1 (431 aa).

The signal sequence occupies residues 1–21 (MASTGVSVIVVGLGLAGLTTA). FAD-binding residues include E35 and R110. R188 is an active-site residue. D313 contacts FAD.

It belongs to the paxM FAD-dependent monooxygenase family. FAD is required as a cofactor.

Its pathway is secondary metabolite biosynthesis. Functionally, FAD-dependent monooxygenase; part of the gene cluster that mediates the biosynthesis of the indole diterpenes nodulisporic acids (NA). Nodulisporic acid A (NAA) and its chemically modified derivatives are of particular significance because of their highly potent insecticidal activity against blood-feeding arthropods and lack of observable adverse effects on mammals, in particular the tremogenicity associated with the paspaline-derived IDTs is not observed. The geranylgeranyl diphosphate (GGPP) synthase ggs1, localized outside of the cluster, is proposed to catalyze the first step in nodulisporic acid biosynthesis via conversion of farnesyl pyrophosphate and isopentyl pyrophosphate into geranylgeranyl pyrophosphate (GGPP). Condensation of indole-3-glycerol phosphate with GGPP by the prenyl transferase nodC then forms 3-geranylgeranylindole (3-GGI). Epoxidation by the FAD-dependent monooxygenase nodM leads to a single-epoxidized-GGI that is substrate of the terpene cyclase nodB for cyclization to yield emindole SB. The terminal methyl carbon, C28, of emindole SB is then oxidized by the cytochrome P450 monooxygenase nodW to produce nodulisporic acid F (NAF), the pentacyclic core of NAA. NAF is converted to nodulisporic acid E (NAE) via prenylation. This step is probably performed by one of the indole diterpene prenyltransferases nodD1 or nodD2. Several oxidation steps performed by the FAD-linked oxidoreductase nodO and one of the cytochrome P450 monooxygenase nodR, nodX or nodZ further convert NAE to nodulisporic acid D (NAD). NAD is substrate of cytochrome P450 monooxygenase nodJ to produce the precursor of nodulisporic acid C (NAC), converted to NAC by one of the indole diterpene prenyltransferases nodD1 or nodD2. The FAD-dependent monooxygenase nodY2 then oxidizes NAC to nodulisporic acid B (NAB). Finally NAB is converted to NAA by one of the cytochrome P450 monooxygenases nodR, nodX or nodZ. The chain is FAD-dependent monooxygenase nodY1 from Hypoxylon pulicicidum.